Here is a 376-residue protein sequence, read N- to C-terminus: Pyruvate dehydrogenase E1 component subunit beta-2, mitochondrial (376 aa).

The transit peptide at Met-1–Tyr-36 directs the protein to the mitochondrion. Glu-99 serves as a coordination point for thiamine diphosphate. Residues Ile-152, Ala-200, Ile-201, and Asp-203 each coordinate K(+).

In terms of assembly, tetramer of 2 alpha and 2 beta subunits. Requires thiamine diphosphate as cofactor.

Its subcellular location is the mitochondrion matrix. The enzyme catalyses N(6)-[(R)-lipoyl]-L-lysyl-[protein] + pyruvate + H(+) = N(6)-[(R)-S(8)-acetyldihydrolipoyl]-L-lysyl-[protein] + CO2. Its function is as follows. The pyruvate dehydrogenase complex catalyzes the overall conversion of pyruvate to acetyl-CoA and CO(2). It contains multiple copies of three enzymatic components: pyruvate dehydrogenase (E1), dihydrolipoamide acetyltransferase (E2) and lipoamide dehydrogenase (E3). This chain is Pyruvate dehydrogenase E1 component subunit beta-2, mitochondrial, found in Oryza sativa subsp. japonica (Rice).